A 626-amino-acid polypeptide reads, in one-letter code: Alpha terpineol synthase, chloroplastic (626 aa).

Residues 1–38 constitute a chloroplast transit peptide; the sequence is MALLSVAPLASKSRLHKTLITSAHHLKPSPTTIPTLPV. Mg(2+) is bound by residues Asp377, Asp381, and Asp529. The short motif at 377 to 381 is the DDXXD motif element; it reads DDIYD.

It belongs to the terpene synthase family. Tpsd subfamily. Mg(2+) serves as cofactor. Mn(2+) is required as a cofactor.

It localises to the plastid. It is found in the chloroplast. The enzyme catalyses (2E)-geranyl diphosphate + H2O = (S)-alpha-terpineol + diphosphate. It carries out the reaction (2E)-geranyl diphosphate + H2O = (R)-alpha-terpineol + diphosphate. The catalysed reaction is (2E)-geranyl diphosphate + H2O = (2E)-geraniol + diphosphate. It catalyses the reaction (2E)-geranyl diphosphate = terpinolene + diphosphate. The enzyme catalyses (2E)-geranyl diphosphate = (4S)-limonene + diphosphate. It participates in terpene metabolism; oleoresin biosynthesis. The protein operates within secondary metabolite biosynthesis; terpenoid biosynthesis. Functionally, monoterpene synthase (TPS) involved in the biosynthesis of monoterpene natural products included in conifer oleoresin secretions and volatile emissions; these compounds contribute to biotic and abiotic stress defense against herbivores and pathogens. Catalyzes the conversion of (2E)-geranyl diphosphate (GPP) to (-)-alpha-terpineol, (+)-alpha-terpineol and terpin-4-ol, and, to a lower extent, to geraniol, terpinolene and (-)-limonene. The sequence is that of Alpha terpineol synthase, chloroplastic from Pinus banksiana (Jack pine).